Here is a 237-residue protein sequence, read N- to C-terminus: D-aminoacyl-tRNA deacylase (237 aa).

Belongs to the DtdA deacylase family. Monomer. The cofactor is Zn(2+).

It catalyses the reaction a D-aminoacyl-tRNA + H2O = a tRNA + a D-alpha-amino acid + H(+). It carries out the reaction glycyl-tRNA(Ala) + H2O = tRNA(Ala) + glycine + H(+). In terms of biological role, D-aminoacyl-tRNA deacylase with broad substrate specificity. By recycling D-aminoacyl-tRNA to D-amino acids and free tRNA molecules, this enzyme counteracts the toxicity associated with the formation of D-aminoacyl-tRNA entities in vivo. The polypeptide is D-aminoacyl-tRNA deacylase (Metallosphaera sedula (strain ATCC 51363 / DSM 5348 / JCM 9185 / NBRC 15509 / TH2)).